A 211-amino-acid polypeptide reads, in one-letter code: Ribonuclease P protein component 3 (211 aa).

Belongs to the eukaryotic/archaeal RNase P protein component 3 family. In terms of assembly, consists of a catalytic RNA component and at least 4-5 protein subunits.

The protein localises to the cytoplasm. It catalyses the reaction Endonucleolytic cleavage of RNA, removing 5'-extranucleotides from tRNA precursor.. Its function is as follows. Part of ribonuclease P, a protein complex that generates mature tRNA molecules by cleaving their 5'-ends. The protein is Ribonuclease P protein component 3 of Aeropyrum pernix (strain ATCC 700893 / DSM 11879 / JCM 9820 / NBRC 100138 / K1).